The sequence spans 852 residues: Sarcoplasmic reticulum histidine-rich calcium-binding protein (852 aa).

The signal sequence occupies residues 1 to 27 (MGCRGPWLHTCLLWAAVASLLLPPAVT). Q28 carries the pyrrolidone carboxylic acid modification. A compositionally biased stretch (low complexity) spans 44-58 (AGAPGPSGEAAAAGL). The tract at residues 44–770 (AGAPGPSGEA…EDTGPEDTQE (727 aa)) is disordered. 2 repeat units span residues 59-79 (GHHGHSHRSPGEENEDVSMEN) and 80-100 (GHHFWSHRDHGETDDEVSREY). The segment at 59-100 (GHHGHSHRSPGEENEDVSMENGHHFWSHRDHGETDDEVSREY) is 2 X approximate tandem repeats. Positions 79 to 101 (NGHHFWSHRDHGETDDEVSREYG) are enriched in basic and acidic residues. S120 carries the phosphoserine modification. The span at 146 to 157 (LAEHGSHGHGHE) shows a compositional bias: basic and acidic residues. Acidic residues-rich tracts occupy residues 184–195 (EEGEEEEEEEEV), 208–217 (DEEDEDDDST), 233–246 (EEDEDDDDDEGDST), 261–275 (EEEDEEDDDDEGDST), 291–303 (EEDEDDDDEGDST), 319–332 (EEDDDDDDDEGDST), 348–360 (EEDEDDDDEGDST), 376–388 (EEDEDDDDEGDST), 404–416 (EEDEDDDDEGDST), 432–444 (EEDEEDDDEGDST), 459–468 (EEEDEDDDDE), and 484–497 (EDDGGDDDDGDDST). Tandem repeats lie at residues 199 to 224 (HRHRGHGKEDEEDEDDDSTESDRHQA), 225 to 253 (HRHRGHREEEDEDDDDDEGDSTESDHHQA), 254 to 282 (HRHRGHEEEEDEEDDDDEGDSTESDRHQA), 283 to 310 (HRHRGHREEEDEDDDDEGDSTESDRHQA), 311 to 339 (HRHRGHREEEDDDDDDDEGDSTESDRHQA), 340 to 367 (HRHRGHREEEDEDDDDEGDSTESDRHQA), 368 to 395 (HRHRGHREEEDEDDDDEGDSTESDRHQA), 396 to 423 (HRHRGHREEEDEDDDDEGDSTESDHHQA), 424 to 451 (HRHRGHREEEDEEDDDEGDSTESDRHQA), and 452 to 470 (HRHRGHGEEEDEDDDDEGE). Positions 199–470 (HRHRGHGKED…EDEDDDDEGE (272 aa)) are 10 X tandem repeats, acidic. The 4 X approximate tandem repeats stretch occupies residues 471 to 585 (HHHVPHRGHR…HHVASHPPPG (115 aa)). Basic and acidic residues predominate over residues 509–536 (HGKEEAEVTSDEHHHHVPDHGHQGHGDK). A phosphoserine mark is found at S518, S544, and S614. Basic and acidic residues-rich tracts occupy residues 587–619 (RSREGHAEEHQTEVPGHHQHRMGDTDTSAERGH), 630–646 (PPEDTVHHHRGSLKEEV), and 658–681 (DGSRVKRGGSEEEEEQKGTHHHSL). Positions 722–733 (EEEEEEEEEEEE) are enriched in acidic residues. The segment covering 746 to 757 (SGREAAGGASSE) has biased composition (low complexity). Residues 758 to 769 (ESAEDTGPEDTQ) are compositionally biased toward acidic residues. A metal-binding region spans residues 780 to 826 (CGYCTFCNRCTECEHCHCDEDSMGEHCDQCQHCQFCYLCPLVCETVC).

The protein belongs to the HRC family. Post-translationally, the N-terminus is blocked.

Its subcellular location is the sarcoplasmic reticulum lumen. In terms of biological role, may play a role in the regulation of calcium sequestration or release in the SR of skeletal and cardiac muscle. The chain is Sarcoplasmic reticulum histidine-rich calcium-binding protein (HRC) from Oryctolagus cuniculus (Rabbit).